The sequence spans 411 residues: Citrate synthase (411 aa).

Catalysis depends on residues His-304 and Asp-363.

It belongs to the citrate synthase family.

It catalyses the reaction oxaloacetate + acetyl-CoA + H2O = citrate + CoA + H(+). It participates in carbohydrate metabolism; tricarboxylic acid cycle; isocitrate from oxaloacetate: step 1/2. This chain is Citrate synthase (gltA), found in Rickettsia parkeri.